The chain runs to 133 residues: UPF0768 protein C977.18 (133 aa).

This sequence belongs to the UPF0768 family.

This chain is UPF0768 protein C977.18, found in Schizosaccharomyces pombe (strain 972 / ATCC 24843) (Fission yeast).